We begin with the raw amino-acid sequence, 297 residues long: Homoserine kinase (297 aa).

Residue 82 to 92 (PLTRGLGSSAS) participates in ATP binding.

This sequence belongs to the GHMP kinase family. Homoserine kinase subfamily.

The protein resides in the cytoplasm. The enzyme catalyses L-homoserine + ATP = O-phospho-L-homoserine + ADP + H(+). Its pathway is amino-acid biosynthesis; L-threonine biosynthesis; L-threonine from L-aspartate: step 4/5. Catalyzes the ATP-dependent phosphorylation of L-homoserine to L-homoserine phosphate. The chain is Homoserine kinase from Bacillus cereus (strain AH187).